A 344-amino-acid chain; its full sequence is Arginine N-succinyltransferase (344 aa).

Leu125 lines the succinyl-CoA pocket. Residue His229 is the Proton donor of the active site.

It belongs to the arginine N-succinyltransferase family.

It carries out the reaction succinyl-CoA + L-arginine = N(2)-succinyl-L-arginine + CoA + H(+). It functions in the pathway amino-acid degradation; L-arginine degradation via AST pathway; L-glutamate and succinate from L-arginine: step 1/5. In terms of biological role, catalyzes the transfer of succinyl-CoA to arginine to produce N(2)-succinylarginine. The chain is Arginine N-succinyltransferase from Shigella boydii serotype 18 (strain CDC 3083-94 / BS512).